A 161-amino-acid chain; its full sequence is Nucleotide-binding protein XAC3671 (161 aa).

This sequence belongs to the YajQ family.

In terms of biological role, nucleotide-binding protein. This is Nucleotide-binding protein XAC3671 from Xanthomonas axonopodis pv. citri (strain 306).